The chain runs to 433 residues: Cell division protein FtsZ homolog 1, chloroplastic (433 aa).

The transit peptide at 1 to 66 directs the protein to the chloroplast; sequence MAIIPLAQLN…TRSKSMRLRC (66 aa). An N-acetylserine modification is found at serine 67. GTP is bound by residues 83–87, 170–172, glutamate 201, arginine 205, and aspartate 249; these read GGGNN and GTG. The interval 399 to 433 is disordered; the sequence is GSSGQQENKGMSLPHQKQSPSTISTKSSSPRRLFF. The segment covering 414 to 433 has biased composition (low complexity); it reads QKQSPSTISTKSSSPRRLFF.

The protein belongs to the FtsZ family. As to quaternary structure, aggregates to form a contractile ring-like structure; contraction of the ring was accompanied by an increase in the filament turnover rate. This aggregation is regulated in midchloroplast stroma by MIND1 (repressor) and MINE1 (promoter). Self-interacts and binds to FTSZ2-1 in heteromers to form two morphologically distinct types of filaments, termed type-I (smooth filaments) and type-II (rough filaments), in a GTP-dependent manner. Interacts with ARC3. Part of a complex made of ARC3, ARC6, FTSZ1 and FTSZ2. As to expression, in pollen grain, restricted to plastids of vegetative cells. Also present in pollen tubes plastids.

The protein resides in the plastid. The protein localises to the chloroplast stroma. It localises to the chloroplast thylakoid membrane. Exhibits GTPase activity. Component of the plastid division machinery that forms a contractile ring at the division site. Required for plastid division in a dose-dependent manner. Involved in epidermal plastids division in a MINE1-dependent manner. Involved in blue light-induced chloroplast movements. May regulate thylakoid development. In the vegetative shoot apex, at the shoot apical meristem (SAM), where the proplastid-to-chloroplast transition takes place, contributes equally with FTSZ2-1 in the L2 layer to plastid division. The protein is Cell division protein FtsZ homolog 1, chloroplastic of Arabidopsis thaliana (Mouse-ear cress).